The sequence spans 305 residues: Protoheme IX farnesyltransferase 2 (305 aa).

Helical transmembrane passes span 38 to 58 (LITT…SFLG), 60 to 80 (INTV…SCAI), 115 to 135 (ILLV…AAVI), 157 to 177 (INTV…WTAV), 181 to 201 (IGVV…PHFL), 227 to 247 (VTKR…FFLG), 249 to 269 (LGLP…ILGL), and 285 to 305 (FVYS…LTLF).

This sequence belongs to the UbiA prenyltransferase family. Protoheme IX farnesyltransferase subfamily. In terms of assembly, interacts with CtaA.

The protein resides in the cell membrane. The enzyme catalyses heme b + (2E,6E)-farnesyl diphosphate + H2O = Fe(II)-heme o + diphosphate. It participates in porphyrin-containing compound metabolism; heme O biosynthesis; heme O from protoheme: step 1/1. Its function is as follows. Converts heme B (protoheme IX) to heme O by substitution of the vinyl group on carbon 2 of heme B porphyrin ring with a hydroxyethyl farnesyl side group. This chain is Protoheme IX farnesyltransferase 2 (ctaB2), found in Bacillus subtilis (strain 168).